The sequence spans 286 residues: Acetylglutamate kinase (286 aa).

Substrate-binding positions include G70–G71, R92, and N184.

This sequence belongs to the acetylglutamate kinase family. ArgB subfamily.

The protein resides in the cytoplasm. It carries out the reaction N-acetyl-L-glutamate + ATP = N-acetyl-L-glutamyl 5-phosphate + ADP. Its pathway is amino-acid biosynthesis; L-arginine biosynthesis; N(2)-acetyl-L-ornithine from L-glutamate: step 2/4. Its function is as follows. Catalyzes the ATP-dependent phosphorylation of N-acetyl-L-glutamate. In Ruegeria sp. (strain TM1040) (Silicibacter sp.), this protein is Acetylglutamate kinase.